The sequence spans 241 residues: dTTP/UTP pyrophosphatase (241 aa).

Phosphoserine is present on Ser38. Asp105 serves as the catalytic Proton acceptor.

It belongs to the Maf family. YhdE subfamily. A divalent metal cation serves as cofactor.

It localises to the cytoplasm. The protein localises to the nucleus. The enzyme catalyses dTTP + H2O = dTMP + diphosphate + H(+). The catalysed reaction is UTP + H2O = UMP + diphosphate + H(+). In terms of biological role, nucleoside triphosphate pyrophosphatase that hydrolyzes dTTP and UTP. May have a dual role in cell division arrest and in preventing the incorporation of modified nucleotides into cellular nucleic acids. This chain is dTTP/UTP pyrophosphatase, found in Schizosaccharomyces pombe (strain 972 / ATCC 24843) (Fission yeast).